The following is a 361-amino-acid chain: Nicotinate-nucleotide--dimethylbenzimidazole phosphoribosyltransferase (361 aa).

The active-site Proton acceptor is the Glu314.

The protein belongs to the CobT family.

The catalysed reaction is 5,6-dimethylbenzimidazole + nicotinate beta-D-ribonucleotide = alpha-ribazole 5'-phosphate + nicotinate + H(+). It functions in the pathway nucleoside biosynthesis; alpha-ribazole biosynthesis; alpha-ribazole from 5,6-dimethylbenzimidazole: step 1/2. Its function is as follows. Catalyzes the synthesis of alpha-ribazole-5'-phosphate from nicotinate mononucleotide (NAMN) and 5,6-dimethylbenzimidazole (DMB). In Mycobacterium bovis (strain BCG / Pasteur 1173P2), this protein is Nicotinate-nucleotide--dimethylbenzimidazole phosphoribosyltransferase.